Consider the following 177-residue polypeptide: ATP synthase subunit b (177 aa).

The chain crosses the membrane as a helical span at residues 29–49 (FFFVLAIFLIVLAVIGTFVVP).

The protein belongs to the ATPase B chain family. As to quaternary structure, F-type ATPases have 2 components, F(1) - the catalytic core - and F(0) - the membrane proton channel. F(1) has five subunits: alpha(3), beta(3), gamma(1), delta(1), epsilon(1). F(0) has three main subunits: a(1), b(2) and c(10-14). The alpha and beta chains form an alternating ring which encloses part of the gamma chain. F(1) is attached to F(0) by a central stalk formed by the gamma and epsilon chains, while a peripheral stalk is formed by the delta and b chains.

Its subcellular location is the cell membrane. In terms of biological role, f(1)F(0) ATP synthase produces ATP from ADP in the presence of a proton or sodium gradient. F-type ATPases consist of two structural domains, F(1) containing the extramembraneous catalytic core and F(0) containing the membrane proton channel, linked together by a central stalk and a peripheral stalk. During catalysis, ATP synthesis in the catalytic domain of F(1) is coupled via a rotary mechanism of the central stalk subunits to proton translocation. Functionally, component of the F(0) channel, it forms part of the peripheral stalk, linking F(1) to F(0). This is ATP synthase subunit b from Mycolicibacterium paratuberculosis (strain ATCC BAA-968 / K-10) (Mycobacterium paratuberculosis).